A 397-amino-acid polypeptide reads, in one-letter code: 3-ketoacyl-CoA thiolase, mitochondrial (397 aa).

The N-terminal 16 residues, Met-1 to Pro-16, are a transit peptide targeting the mitochondrion; not cleaved. Lys-25 carries the post-translational modification N6-acetyllysine; alternate. The residue at position 25 (Lys-25) is an N6-succinyllysine; alternate. The residue at position 45 (Lys-45) is an N6-succinyllysine. Cys-92 functions as the Acyl-thioester intermediate in the catalytic mechanism. Phosphothreonine is present on Thr-119. Ser-121 carries the post-translational modification Phosphoserine. Position 127 is a phosphotyrosine (Tyr-127). A Phosphothreonine modification is found at Thr-136. An N6-acetyllysine; alternate modification is found at Lys-137. At Lys-137 the chain carries N6-succinyllysine; alternate. At Ser-140 the chain carries Phosphoserine. Lys-143, Lys-171, Lys-191, and Lys-209 each carry N6-acetyllysine; alternate. An N6-succinyllysine; alternate mark is found at Lys-143, Lys-171, Lys-191, and Lys-209. N6-succinyllysine occurs at positions 211, 212, and 214. CoA is bound by residues Arg-224 and Thr-227. Lys-234 is subject to N6-acetyllysine; alternate. Lys-234 is modified (N6-succinyllysine; alternate). Lys-240 is subject to N6-succinyllysine. An N6-acetyllysine modification is found at Lys-241. Ser-251 contacts CoA. N6-acetyllysine occurs at positions 269 and 270. The residue at position 305 (Lys-305) is an N6-acetyllysine; alternate. Lys-305 is subject to N6-succinyllysine; alternate. Ser-310 is subject to Phosphoserine. Lys-312 carries the post-translational modification N6-acetyllysine; alternate. Lys-312 bears the N6-succinyllysine; alternate mark. A Phosphoserine modification is found at Ser-333. Lys-340 and Lys-375 each carry N6-acetyllysine. The active-site Proton donor/acceptor is Cys-382.

The protein belongs to the thiolase-like superfamily. Thiolase family. In terms of assembly, homotetramer. Interacts with BNIP3.

The protein localises to the mitochondrion. The catalysed reaction is an acyl-CoA + acetyl-CoA = a 3-oxoacyl-CoA + CoA. It carries out the reaction 2 acetyl-CoA = acetoacetyl-CoA + CoA. The enzyme catalyses acetyl-CoA + H2O = acetate + CoA + H(+). It catalyses the reaction propanoyl-CoA + H2O = propanoate + CoA + H(+). The catalysed reaction is butanoyl-CoA + H2O = butanoate + CoA + H(+). It carries out the reaction hexanoyl-CoA + H2O = hexanoate + CoA + H(+). The enzyme catalyses octanoyl-CoA + H2O = octanoate + CoA + H(+). It catalyses the reaction decanoyl-CoA + H2O = decanoate + CoA + H(+). The catalysed reaction is dodecanoyl-CoA + H2O = dodecanoate + CoA + H(+). It carries out the reaction tetradecanoyl-CoA + H2O = tetradecanoate + CoA + H(+). The enzyme catalyses hexadecanoyl-CoA + H2O = hexadecanoate + CoA + H(+). Its pathway is lipid metabolism; fatty acid beta-oxidation. Its function is as follows. In the production of energy from fats, this is one of the enzymes that catalyzes the last step of the mitochondrial beta-oxidation pathway, an aerobic process breaking down fatty acids into acetyl-CoA. Using free coenzyme A/CoA, catalyzes the thiolytic cleavage of medium- to long-chain unbranched 3-oxoacyl-CoAs into acetyl-CoA and a fatty acyl-CoA shortened by two carbon atoms. Also catalyzes the condensation of two acetyl-CoA molecules into acetoacetyl-CoA and could be involved in the production of ketone bodies. Also displays hydrolase activity on various fatty acyl-CoAs. Thereby, could be responsible for the production of acetate in a side reaction to beta-oxidation. Abolishes BNIP3-mediated apoptosis and mitochondrial damage. This Homo sapiens (Human) protein is 3-ketoacyl-CoA thiolase, mitochondrial (ACAA2).